The chain runs to 624 residues: Actin-related protein 8 (624 aa).

Position 1 is an N-acetylmethionine (Met1). The segment covering 1–25 (MTQAEKGDTENGKEKGGEKEKEQRG) has biased composition (basic and acidic residues). Residues 1-29 (MTQAEKGDTENGKEKGGEKEKEQRGVKRP) are disordered. ATP contacts are provided by Ser55 and Thr56. Ser132 carries the phosphoserine modification. 283–286 (DVGD) serves as a coordination point for ATP. Ser412 carries the post-translational modification Phosphoserine. The segment at 430-462 (SKQEQSAKATADRKSASKPIGFEGDLRGQSSDL) is disordered.

The protein belongs to the actin family. ARP8 subfamily. Component of the chromatin remodeling INO80 complex; specifically part of a complex module associated with the DBINO domain of INO80. Exists as monomers and dimers, but the dimer is most probably the biologically relevant form required for stable interactions with histones that exploits the twofold symmetry of the nucleosome core.

Its subcellular location is the nucleus. The protein localises to the chromosome. Functionally, plays an important role in the functional organization of mitotic chromosomes. Exhibits low basal ATPase activity, and unable to polymerize. In terms of biological role, proposed core component of the chromatin remodeling INO80 complex which is involved in transcriptional regulation, DNA replication and probably DNA repair. Required for the recruitment of INO80 (and probably the INO80 complex) to sites of DNA damage Strongly prefer nucleosomes and H3-H4 tetramers over H2A-H2B dimers, suggesting it may act as a nucleosome recognition module within the complex. In Pongo abelii (Sumatran orangutan), this protein is Actin-related protein 8 (ACTR8).